Reading from the N-terminus, the 600-residue chain is NADH-quinone oxidoreductase subunit C/D (600 aa).

Positions 1-190 (MVNNMTDLTA…SPFELTKAKQ (190 aa)) are NADH dehydrogenase I subunit C. Residues 214-600 (DFMFLNLGPN…IDFVMSDVDR (387 aa)) are NADH dehydrogenase I subunit D.

It in the N-terminal section; belongs to the complex I 30 kDa subunit family. The protein in the C-terminal section; belongs to the complex I 49 kDa subunit family. NDH-1 is composed of 13 different subunits. Subunits NuoB, CD, E, F, and G constitute the peripheral sector of the complex.

Its subcellular location is the cell inner membrane. It catalyses the reaction a quinone + NADH + 5 H(+)(in) = a quinol + NAD(+) + 4 H(+)(out). In terms of biological role, NDH-1 shuttles electrons from NADH, via FMN and iron-sulfur (Fe-S) centers, to quinones in the respiratory chain. The immediate electron acceptor for the enzyme in this species is believed to be ubiquinone. Couples the redox reaction to proton translocation (for every two electrons transferred, four hydrogen ions are translocated across the cytoplasmic membrane), and thus conserves the redox energy in a proton gradient. The chain is NADH-quinone oxidoreductase subunit C/D from Escherichia coli (strain ATCC 8739 / DSM 1576 / NBRC 3972 / NCIMB 8545 / WDCM 00012 / Crooks).